The sequence spans 227 residues: Ribosomal RNA large subunit methyltransferase E (227 aa).

Residues glycine 78, tryptophan 80, aspartate 103, aspartate 119, and aspartate 143 each coordinate S-adenosyl-L-methionine. The Proton acceptor role is filled by lysine 183.

The protein belongs to the class I-like SAM-binding methyltransferase superfamily. RNA methyltransferase RlmE family.

Its subcellular location is the cytoplasm. The enzyme catalyses uridine(2552) in 23S rRNA + S-adenosyl-L-methionine = 2'-O-methyluridine(2552) in 23S rRNA + S-adenosyl-L-homocysteine + H(+). In terms of biological role, specifically methylates the uridine in position 2552 of 23S rRNA at the 2'-O position of the ribose in the fully assembled 50S ribosomal subunit. The polypeptide is Ribosomal RNA large subunit methyltransferase E (Rickettsia bellii (strain RML369-C)).